A 308-amino-acid chain; its full sequence is Ribosomal RNA large subunit methyltransferase F (308 aa).

Belongs to the methyltransferase superfamily. METTL16/RlmF family.

It localises to the cytoplasm. The catalysed reaction is adenosine(1618) in 23S rRNA + S-adenosyl-L-methionine = N(6)-methyladenosine(1618) in 23S rRNA + S-adenosyl-L-homocysteine + H(+). Its function is as follows. Specifically methylates the adenine in position 1618 of 23S rRNA. The protein is Ribosomal RNA large subunit methyltransferase F of Escherichia coli O6:H1 (strain CFT073 / ATCC 700928 / UPEC).